The chain runs to 223 residues: Leucyl/phenylalanyl-tRNA--protein transferase (223 aa).

It belongs to the L/F-transferase family.

The protein localises to the cytoplasm. The catalysed reaction is N-terminal L-lysyl-[protein] + L-leucyl-tRNA(Leu) = N-terminal L-leucyl-L-lysyl-[protein] + tRNA(Leu) + H(+). It catalyses the reaction N-terminal L-arginyl-[protein] + L-leucyl-tRNA(Leu) = N-terminal L-leucyl-L-arginyl-[protein] + tRNA(Leu) + H(+). The enzyme catalyses L-phenylalanyl-tRNA(Phe) + an N-terminal L-alpha-aminoacyl-[protein] = an N-terminal L-phenylalanyl-L-alpha-aminoacyl-[protein] + tRNA(Phe). Functionally, functions in the N-end rule pathway of protein degradation where it conjugates Leu, Phe and, less efficiently, Met from aminoacyl-tRNAs to the N-termini of proteins containing an N-terminal arginine or lysine. The chain is Leucyl/phenylalanyl-tRNA--protein transferase from Dinoroseobacter shibae (strain DSM 16493 / NCIMB 14021 / DFL 12).